Consider the following 368-residue polypeptide: Probable dual-specificity RNA methyltransferase RlmN (368 aa).

The active-site Proton acceptor is the Glu-100. Residues 106 to 344 form the Radical SAM core domain; sequence QHYGLSVCVT…CVVRQEHGTD (239 aa). Cys-113 and Cys-349 form a disulfide bridge. [4Fe-4S] cluster contacts are provided by Cys-120, Cys-124, and Cys-127. Residues 172-173, Ser-204, 227-229, and Asn-305 contribute to the S-adenosyl-L-methionine site; these read GE and SLH. Residue Cys-349 is the S-methylcysteine intermediate of the active site.

Belongs to the radical SAM superfamily. RlmN family. [4Fe-4S] cluster is required as a cofactor.

It is found in the cytoplasm. It carries out the reaction adenosine(2503) in 23S rRNA + 2 reduced [2Fe-2S]-[ferredoxin] + 2 S-adenosyl-L-methionine = 2-methyladenosine(2503) in 23S rRNA + 5'-deoxyadenosine + L-methionine + 2 oxidized [2Fe-2S]-[ferredoxin] + S-adenosyl-L-homocysteine. It catalyses the reaction adenosine(37) in tRNA + 2 reduced [2Fe-2S]-[ferredoxin] + 2 S-adenosyl-L-methionine = 2-methyladenosine(37) in tRNA + 5'-deoxyadenosine + L-methionine + 2 oxidized [2Fe-2S]-[ferredoxin] + S-adenosyl-L-homocysteine. In terms of biological role, specifically methylates position 2 of adenine 2503 in 23S rRNA and position 2 of adenine 37 in tRNAs. The sequence is that of Probable dual-specificity RNA methyltransferase RlmN from Streptococcus agalactiae serotype V (strain ATCC BAA-611 / 2603 V/R).